The primary structure comprises 54 residues: Large ribosomal subunit protein bL33A (54 aa).

It belongs to the bacterial ribosomal protein bL33 family.

This chain is Large ribosomal subunit protein bL33A, found in Mycobacterium marinum (strain ATCC BAA-535 / M).